A 245-amino-acid chain; its full sequence is 5'-nucleotidase SurE (245 aa).

The a divalent metal cation site is built by D8, D9, S39, and N97.

It belongs to the SurE nucleotidase family. It depends on a divalent metal cation as a cofactor.

It is found in the cytoplasm. It carries out the reaction a ribonucleoside 5'-phosphate + H2O = a ribonucleoside + phosphate. Its function is as follows. Nucleotidase that shows phosphatase activity on nucleoside 5'-monophosphates. The sequence is that of 5'-nucleotidase SurE from Clostridium kluyveri (strain NBRC 12016).